Reading from the N-terminus, the 345-residue chain is Dihydroorotate dehydrogenase (quinone) (345 aa).

FMN contacts are provided by residues 65-69 (AGLDK) and T89. Substrate is bound at residue K69. 114 to 118 (NRMGF) is a binding site for substrate. FMN contacts are provided by N142 and N175. N175 lines the substrate pocket. S178 acts as the Nucleophile in catalysis. N180 contributes to the substrate binding site. Residues K220 and T248 each coordinate FMN. 249–250 (NT) is a binding site for substrate. FMN is bound by residues G271, G300, and 321–322 (YT).

Belongs to the dihydroorotate dehydrogenase family. Type 2 subfamily. In terms of assembly, monomer. FMN serves as cofactor.

It is found in the cell membrane. The catalysed reaction is (S)-dihydroorotate + a quinone = orotate + a quinol. It functions in the pathway pyrimidine metabolism; UMP biosynthesis via de novo pathway; orotate from (S)-dihydroorotate (quinone route): step 1/1. Catalyzes the conversion of dihydroorotate to orotate with quinone as electron acceptor. In Burkholderia cenocepacia (strain ATCC BAA-245 / DSM 16553 / LMG 16656 / NCTC 13227 / J2315 / CF5610) (Burkholderia cepacia (strain J2315)), this protein is Dihydroorotate dehydrogenase (quinone).